The primary structure comprises 231 residues: Putative cobalt transport protein CbiM 1 (231 aa).

The next 6 membrane-spanning stretches (helical) occupy residues 9–29 (PGPW…YGIF), 41–61 (VLPL…LKLP), 74–94 (GMAV…IVLL), 107–127 (TFGA…YAIY), 135–155 (VNFY…TYVV), and 181–201 (VFAI…TLLF).

The protein belongs to the CbiM family. Forms an energy-coupling factor (ECF) transporter complex composed of an ATP-binding protein (A component, CbiO), a transmembrane protein (T component, CbiQ) and 2 possible substrate-capture proteins (S components, CbiM and CbiN) of unknown stoichimetry.

It is found in the cell membrane. The protein operates within cofactor biosynthesis; adenosylcobalamin biosynthesis. In terms of biological role, part of the energy-coupling factor (ECF) transporter complex CbiMNOQ involved in cobalt import. The sequence is that of Putative cobalt transport protein CbiM 1 from Methanosarcina barkeri (strain Fusaro / DSM 804).